The following is a 286-amino-acid chain: Putative S-adenosyl-L-methionine-dependent methyltransferase FRAAL3718 (286 aa).

S-adenosyl-L-methionine is bound by residues Asp122 and 151 to 152 (DL).

It belongs to the UPF0677 family.

In terms of biological role, exhibits S-adenosyl-L-methionine-dependent methyltransferase activity. The sequence is that of Putative S-adenosyl-L-methionine-dependent methyltransferase FRAAL3718 from Frankia alni (strain DSM 45986 / CECT 9034 / ACN14a).